The following is a 359-amino-acid chain: Methylthioribose-1-phosphate isomerase (359 aa).

Residue Asp235 is the Proton donor of the active site.

Belongs to the eIF-2B alpha/beta/delta subunits family. MtnA subfamily.

The protein resides in the cytoplasm. It is found in the nucleus. It catalyses the reaction 5-(methylsulfanyl)-alpha-D-ribose 1-phosphate = 5-(methylsulfanyl)-D-ribulose 1-phosphate. It participates in amino-acid biosynthesis; L-methionine biosynthesis via salvage pathway; L-methionine from S-methyl-5-thio-alpha-D-ribose 1-phosphate: step 1/6. Functionally, catalyzes the interconversion of methylthioribose-1-phosphate (MTR-1-P) into methylthioribulose-1-phosphate (MTRu-1-P). The sequence is that of Methylthioribose-1-phosphate isomerase (mri1) from Schizosaccharomyces pombe (strain 972 / ATCC 24843) (Fission yeast).